The primary structure comprises 215 residues: 3-isopropylmalate dehydratase small subunit (215 aa).

The protein belongs to the LeuD family. LeuD type 1 subfamily. As to quaternary structure, heterodimer of LeuC and LeuD.

It catalyses the reaction (2R,3S)-3-isopropylmalate = (2S)-2-isopropylmalate. Its pathway is amino-acid biosynthesis; L-leucine biosynthesis; L-leucine from 3-methyl-2-oxobutanoate: step 2/4. Catalyzes the isomerization between 2-isopropylmalate and 3-isopropylmalate, via the formation of 2-isopropylmaleate. This Polynucleobacter asymbioticus (strain DSM 18221 / CIP 109841 / QLW-P1DMWA-1) (Polynucleobacter necessarius subsp. asymbioticus) protein is 3-isopropylmalate dehydratase small subunit.